Reading from the N-terminus, the 1087-residue chain is Exportin-7 (1087 aa).

Residues 30–96 (AEKALVEFTN…RNYVLNYLAT (67 aa)) enclose the Importin N-terminal domain.

It belongs to the exportin family.

The protein localises to the cytoplasm. The protein resides in the nucleus. Functionally, mediates the nuclear export of proteins (cargos) with broad substrate specificity. The polypeptide is Exportin-7 (XPO7) (Gallus gallus (Chicken)).